Consider the following 139-residue polypeptide: Acyl carrier protein 4, chloroplastic (139 aa).

The N-terminal 55 residues, 1-55 (MASAAAGASICIKSASCSPLAPGRISSLRSVSLPVSRKSFPSLRSSKGSFARVSC), are a transit peptide targeting the chloroplast. One can recognise a Carrier domain in the interval 59–134 (PETVAKVCRI…DAADLIEKLM (76 aa)). Ser94 bears the O-(pantetheine 4'-phosphoryl)serine mark.

Belongs to the acyl carrier protein (ACP) family. Post-translationally, 4'-phosphopantetheine is transferred from CoA to a specific serine of apo-ACP by acpS. This modification is essential for activity because fatty acids are bound in thioester linkage to the sulfhydryl of the prosthetic group.

It is found in the plastid. It localises to the chloroplast. It participates in lipid metabolism; fatty acid biosynthesis. Carrier of the growing fatty acid chain in fatty acid biosynthesis. This Cuphea lanceolata (Cigar flower) protein is Acyl carrier protein 4, chloroplastic (ACL1).